We begin with the raw amino-acid sequence, 138 residues long: Acidic phospholipase A2 RV-7 (138 aa).

An N-terminal signal peptide occupies residues 1–16; it reads MRTLWIVAVCLIGVEG. 7 disulfides stabilise this stretch: cysteine 42–cysteine 131, cysteine 44–cysteine 60, cysteine 59–cysteine 111, cysteine 65–cysteine 138, cysteine 66–cysteine 104, cysteine 73–cysteine 97, and cysteine 91–cysteine 102. 3 residues coordinate Ca(2+): tyrosine 43, glycine 45, and glycine 47. The active site involves histidine 63. Aspartate 64 provides a ligand contact to Ca(2+). Aspartate 105 is a catalytic residue.

It belongs to the phospholipase A2 family. Group II subfamily. D49 sub-subfamily. As to quaternary structure, heterodimer of a weakly toxic basic protein having phospholipase A2 activity (RV-4) and a non-toxic acidic protein which inhibits its enzymatic activity but potentiates its lethal potency and neurotoxicity (RV-7). Ca(2+) is required as a cofactor. Expressed by the venom gland.

Its subcellular location is the secreted. It carries out the reaction a 1,2-diacyl-sn-glycero-3-phosphocholine + H2O = a 1-acyl-sn-glycero-3-phosphocholine + a fatty acid + H(+). In terms of biological role, heterodimer: RV-4/RV-7 targets the presynaptic sites of the neuromuscular junction. Monomer: snake venom phospholipase A2 (PLA2) RV-7 that has low enzymatic activity and is not toxic. It inhibits the enzymatic activity of RV-4 in vitro but potentiates its lethal potency and neurotoxicity. It may facilitate the specific binding of RV-4 to its presynaptic binding sites, probably by acting as a chaperone, minimizing distraction and destruction of RV-4 en route to the site of action by reducing non-specific binding to muscle and other organs. PLA2 catalyzes the calcium-dependent hydrolysis of the 2-acyl groups in 3-sn-phosphoglycerides. This Daboia siamensis (Eastern Russel's viper) protein is Acidic phospholipase A2 RV-7.